Here is a 695-residue protein sequence, read N- to C-terminus: Potassium voltage-gated channel subfamily KQT member 4 (695 aa).

The segment at 1-21 (MAEAPPRRLGLGPPPGDAPRA) is disordered. Residues 1–96 (MAEAPPRRLG…VYNVLERPRG (96 aa)) lie on the Cytoplasmic side of the membrane. Arg93 serves as a coordination point for a 1,2-diacyl-sn-glycero-3-phospho-(1D-myo-inositol-4,5-bisphosphate). Residues 97–118 (WAFVYHVFIFLLVFSCLVLSVL) form a helical membrane-spanning segment. The Extracellular segment spans residues 119-129 (STIQEHQELAN). Residues 130 to 152 (ECLLILEFVMIVVFGLEYIVRVW) form a helical membrane-spanning segment. Topologically, residues 153–168 (SAGCCCRYRGWQGRFR) are cytoplasmic. The helical transmembrane segment at 169–191 (FARKPFCVIDFIVFVASVAVIAA) threads the bilayer. Lys172 provides a ligand contact to a 1,2-diacyl-sn-glycero-3-phospho-(1D-myo-inositol-4,5-bisphosphate). Topologically, residues 192-202 (GTQGNIFATSA) are extracellular. The chain crosses the membrane as a helical; Voltage-sensor span at residues 203 to 223 (LRSMRFLQILRMVRMDRRGGT). Arg219, Arg220, Lys225, and Ser235 together coordinate a 1,2-diacyl-sn-glycero-3-phospho-(1D-myo-inositol-4,5-bisphosphate). Over 224–235 (WKLLGSVVYAHS) the chain is Cytoplasmic. Residues 236 to 258 (KELITAWYIGFLVLIFASFLVYL) form a helical membrane-spanning segment. Over 259-270 (AEKDANSDFSSY) the chain is Extracellular. The pore-forming intramembrane region spans 271–292 (ADSLWWGTITLTTIGYGDKTPH). Position 293 (Thr293) is a topological domain, extracellular. The helical transmembrane segment at 294–322 (WLGRVLAAGFALLGISFFALPAGILGSGF) threads the bilayer. The Cytoplasmic segment spans residues 323–695 (ALKVQEQHRQ…ISRSVSTNMD (373 aa)). 2 residues coordinate a 1,2-diacyl-sn-glycero-3-phospho-(1D-myo-inositol-4,5-bisphosphate): His330 and Lys333. The tract at residues 342 to 351 (AANLIQAAWR) is interaction with CALM. Disordered regions lie at residues 400-480 (RRAP…TKVQ) and 496-515 (RLKP…AEEK). 2 stretches are compositionally biased toward polar residues: residues 443 to 452 (GSSQRRTGPS) and 463 to 480 (TSPS…TKVQ). An interaction with CALM region spans residues 535-549 (RSIRILKFLVAKRKF). Residues 546-650 (KRKFKETLRP…SRCLRSGTSA (105 aa)) are C-terminal assembly domain (tetramerization). Residues 587 to 606 (VGRGPGDRKAREKGDKGPSD) form a disordered region. A compositionally biased stretch (basic and acidic residues) spans 591-605 (PGDRKAREKGDKGPS). A coiled-coil region spans residues 615-636 (MMGRVVKVEKQVQSIEHKLDLL).

The protein belongs to the potassium channel family. KQT (TC 1.A.1.15) subfamily. Kv7.4/KCNQ4 sub-subfamily. As to quaternary structure, homotetramer. Interacts (via C-terminus) with calmodulin; forms a heterooctameric structure (with 4:4 KCNQ1:CALM stoichiometry); the interaction is calcium-independent, constitutive, participates in the proper assembly of a functional channel. The interaction with calcium-free CALM controls channel trafficking whereas interaction with calcium-bound CALM regulates channel gating. May form a functional heteromultimeric channel with KCNQ3. Interacts with HSP90AB1; promotes cell surface expression of KCNQ4. As to expression, expressed in the outer, but not the inner, sensory hair cells of the cochlea. Slightly expressed in heart, brain and skeletal muscle.

It localises to the basal cell membrane. It carries out the reaction K(+)(in) = K(+)(out). With respect to regulation, two molecules of phosphatidylinositol-4,5-bisphosphate (PIP2-I and PIP2-II) are essential to activate KCNQ4 channel by inducing the coupling of the voltage-sensing domain (VSD) and the pore-forming domain (PD). Upon channel activation, PIP2-I and PIP2-II disrupt the VSD-calmodulin/CALM interaction, causing the release of CALM from the VSD which triggers the opening of the gate. Calcium suppresses KCNQ4 channel current through calcium-bound CALM C-terminus. Therefore CALM acts as calcium sensor that controls channel activity. ML213 potentiates KCNQ4 channel. KCNQ4 channel is blocked by linopirdin, XE991 and bepridil, whereas clofilium is without significant effect. Muscarinic agonist oxotremorine-M strongly suppress KCNQ4 current in CHO cells in which cloned KCNQ4 channels were coexpressed with M1 muscarinic receptors. Pore-forming subunit of the voltage-gated potassium (Kv) channel involved in the regulation of sensory cells excitability in the cochlea. KCNQ4/Kv7.4 channel is composed of 4 pore-forming subunits assembled as tetramers. Promotes the outflow of potassium ions in the repolarization phase of action potential which plays a role in regulating membrane potential of excitable cells. The channel conducts a slowly activating and deactivating current. Current often shows some inward rectification at positive potentials. Channel may be selectively permeable in vitro to other cations besides potassium, in decreasing order of affinity K(+) = Rb(+) &gt; Cs(+) &gt; Na(+). Important for normal physiological function of inner ear such as sensory perception of sound. This is Potassium voltage-gated channel subfamily KQT member 4 from Homo sapiens (Human).